Reading from the N-terminus, the 240-residue chain is Large ribosomal subunit protein uL2 (240 aa).

The segment at 200 to 240 (HPFGGGGRQHPGKPKSISRNAPPGRKVGDIASKRTGRGGNE) is disordered.

It belongs to the universal ribosomal protein uL2 family. In terms of assembly, part of the 50S ribosomal subunit. Forms a bridge to the 30S subunit in the 70S ribosome. Interacts weakly with protein L37Ae.

Functionally, one of the primary rRNA binding proteins. Required for association of the 30S and 50S subunits to form the 70S ribosome, for tRNA binding and peptide bond formation. It has been suggested to have peptidyltransferase activity; this is somewhat controversial. Makes several contacts with the 16S rRNA in the 70S ribosome. The chain is Large ribosomal subunit protein uL2 (rpl2) from Haloarcula marismortui (strain ATCC 43049 / DSM 3752 / JCM 8966 / VKM B-1809) (Halobacterium marismortui).